Here is a 494-residue protein sequence, read N- to C-terminus: Acetyl-coenzyme A carboxylase carboxyl transferase subunit beta, chloroplastic (494 aa).

A CoA carboxyltransferase N-terminal domain is found at 226-494 (LWVQCENCYG…VPLNQNETEH (269 aa)). Zn(2+) contacts are provided by Cys-230, Cys-233, Cys-249, and Cys-252. The C4-type zinc finger occupies 230-252 (CENCYGLNYKKFLKSKMNICEQC).

The protein belongs to the AccD/PCCB family. Acetyl-CoA carboxylase is a heterohexamer composed of biotin carboxyl carrier protein, biotin carboxylase and 2 subunits each of ACCase subunit alpha and ACCase plastid-coded subunit beta (accD). Requires Zn(2+) as cofactor.

The protein localises to the plastid. The protein resides in the chloroplast stroma. The catalysed reaction is N(6)-carboxybiotinyl-L-lysyl-[protein] + acetyl-CoA = N(6)-biotinyl-L-lysyl-[protein] + malonyl-CoA. It functions in the pathway lipid metabolism; malonyl-CoA biosynthesis; malonyl-CoA from acetyl-CoA: step 1/1. Its function is as follows. Component of the acetyl coenzyme A carboxylase (ACC) complex. Biotin carboxylase (BC) catalyzes the carboxylation of biotin on its carrier protein (BCCP) and then the CO(2) group is transferred by the transcarboxylase to acetyl-CoA to form malonyl-CoA. The protein is Acetyl-coenzyme A carboxylase carboxyl transferase subunit beta, chloroplastic of Coffea arabica (Arabian coffee).